A 392-amino-acid chain; its full sequence is ATP phosphoribosyltransferase regulatory subunit (392 aa).

The protein belongs to the class-II aminoacyl-tRNA synthetase family. HisZ subfamily. Heteromultimer composed of HisG and HisZ subunits.

The protein localises to the cytoplasm. It functions in the pathway amino-acid biosynthesis; L-histidine biosynthesis; L-histidine from 5-phospho-alpha-D-ribose 1-diphosphate: step 1/9. Required for the first step of histidine biosynthesis. May allow the feedback regulation of ATP phosphoribosyltransferase activity by histidine. In Prochlorococcus marinus (strain MIT 9303), this protein is ATP phosphoribosyltransferase regulatory subunit.